A 263-amino-acid chain; its full sequence is MLTITAIKAFNDNYIWVLQQQPHTQVYVVDPGDASVVIDYLEANKLTLAGILLTHHHNDHTGGVAELQAYSQNRLSVYGPDNEKIEGITHPLHATAQPRFILDYMSGELQVLDVPGHTAGHIAYVIADALFCGDTLFSGGCGRLFEGTPAQMLNSLQQLAQLPADTRVYCAHEYTLSNLKFALAVNPNNRALQDYNERAIALRRQEKATIPSTIALERAINPFLRASDTEIVDSIKQHFSDLNHANLDELGGFTLLRQWKDNF.

Zn(2+) is bound by residues His55, His57, Asp59, His60, His117, Asp134, and His172.

Belongs to the metallo-beta-lactamase superfamily. Glyoxalase II family. Monomer. Zn(2+) serves as cofactor.

It catalyses the reaction an S-(2-hydroxyacyl)glutathione + H2O = a 2-hydroxy carboxylate + glutathione + H(+). It participates in secondary metabolite metabolism; methylglyoxal degradation; (R)-lactate from methylglyoxal: step 2/2. Its function is as follows. Thiolesterase that catalyzes the hydrolysis of S-D-lactoyl-glutathione to form glutathione and D-lactic acid. This Shewanella baltica (strain OS185) protein is Hydroxyacylglutathione hydrolase.